The following is a 201-amino-acid chain: MLLSDRDIRAEITAGRVRLDPYDEGLIQPSSVDLRLDRAFRVFQNHRYSHIDPAVEQEDLTELVAPEGDEPFVLHPGEFVLGSTLEVVTLPEDLAGRLEGKSSLGRLGLLTHSTAGFIDPGFSGHVTLELSNVATLPIKLWPGMKIGQLCLFRLSTPAEHPYGSAIYGSRYQGQRGPTPSRAYRDFTRAAVPEIPNGSHGA.

Residues 101-106 (KSSLGR), D119, 127-129 (TLE), Q148, Y162, and Q174 contribute to the dCTP site. E129 serves as the catalytic Proton donor/acceptor.

Belongs to the dCTP deaminase family. Homotrimer.

The catalysed reaction is dCTP + 2 H2O = dUMP + NH4(+) + diphosphate. It functions in the pathway pyrimidine metabolism; dUMP biosynthesis; dUMP from dCTP: step 1/1. Bifunctional enzyme that catalyzes both the deamination of dCTP to dUTP and the hydrolysis of dUTP to dUMP without releasing the toxic dUTP intermediate. This is dCTP deaminase, dUMP-forming from Parafrankia sp. (strain EAN1pec).